A 730-amino-acid polypeptide reads, in one-letter code: Catalase-peroxidase 1 (730 aa).

The tryptophyl-tyrosyl-methioninium (Trp-Tyr) (with M-243) cross-link spans 92–217 (WHSAGTYRTT…LGAAVMGLIY (126 aa)). Residue His-93 is the Proton acceptor of the active site. The tryptophyl-tyrosyl-methioninium (Tyr-Met) (with W-92) cross-link spans 217 to 243 (YVDPEGPNGNPDPLASAENIRESFGRM). A heme b-binding site is contributed by His-258.

The protein belongs to the peroxidase family. Peroxidase/catalase subfamily. In terms of assembly, homodimer or homotetramer. Heme b serves as cofactor. Formation of the three residue Trp-Tyr-Met cross-link is important for the catalase, but not the peroxidase activity of the enzyme.

The catalysed reaction is H2O2 + AH2 = A + 2 H2O. It catalyses the reaction 2 H2O2 = O2 + 2 H2O. Its function is as follows. Bifunctional enzyme with both catalase and broad-spectrum peroxidase activity. The sequence is that of Catalase-peroxidase 1 from Haloarcula marismortui (strain ATCC 43049 / DSM 3752 / JCM 8966 / VKM B-1809) (Halobacterium marismortui).